The sequence spans 330 residues: Probable L-lactate dehydrogenase (330 aa).

Substrate is bound by residues arginine 105, asparagine 137, and arginine 168. NAD(+) is bound at residue asparagine 137. Histidine 192 acts as the Proton acceptor in catalysis.

This sequence belongs to the LDH/MDH superfamily. LDH family. Homotetramer.

Its subcellular location is the cytoplasm. The catalysed reaction is (S)-lactate + NAD(+) = pyruvate + NADH + H(+). It participates in fermentation; pyruvate fermentation to lactate; (S)-lactate from pyruvate: step 1/1. The protein is Probable L-lactate dehydrogenase of Schizosaccharomyces pombe (strain 972 / ATCC 24843) (Fission yeast).